The following is a 941-amino-acid chain: Glycine dehydrogenase (decarboxylating) (941 aa).

Lysine 692 bears the N6-(pyridoxal phosphate)lysine mark.

It belongs to the GcvP family. In terms of assembly, the glycine cleavage system is composed of four proteins: P, T, L and H. It depends on pyridoxal 5'-phosphate as a cofactor.

The catalysed reaction is N(6)-[(R)-lipoyl]-L-lysyl-[glycine-cleavage complex H protein] + glycine + H(+) = N(6)-[(R)-S(8)-aminomethyldihydrolipoyl]-L-lysyl-[glycine-cleavage complex H protein] + CO2. Its function is as follows. The glycine cleavage system catalyzes the degradation of glycine. The P protein binds the alpha-amino group of glycine through its pyridoxal phosphate cofactor; CO(2) is released and the remaining methylamine moiety is then transferred to the lipoamide cofactor of the H protein. In Mycolicibacterium paratuberculosis (strain ATCC BAA-968 / K-10) (Mycobacterium paratuberculosis), this protein is Glycine dehydrogenase (decarboxylating).